The sequence spans 450 residues: Beclin-1 (450 aa).

Position 1 is an N-acetylmethionine (Met1). 2 positions are modified to phosphoserine: Ser15 and Ser30. Positions 48-72 (TTAQAKPGETQEEETNSGEEPFIET) are disordered. Residues Ser90, Ser93, and Ser96 each carry the phosphoserine; by AMPK modification. Residues 108–127 (TMENLSRRLKVTGDLFDIMS) carry the BH3 motif. Residues 112-159 (LSRRLKVTGDLFDIMSGQTDVDHPLCEECTDTLLDQLDTQLNVTENEC) form an interaction with BCL2 and BCL2L1 region. Thr119 is subject to Phosphothreonine; by DAPK1. A coiled-coil region spans residues 142–269 (DTLLDQLDTQ…QLDKLKKTNV (128 aa)). The evolutionary conserved domain (ECD) stretch occupies residues 245–450 (DELKSVENQM…AWVSSQFYNK (206 aa)). Glycyl lysine isopeptide (Lys-Gly) (interchain with G-Cter in ubiquitin) cross-links involve residues Lys402 and Lys437. A required for membrane-association region spans residues 425 to 450 (WTKALKFMLTNLKWGLAWVSSQFYNK).

Belongs to the beclin family. A homodimeric form is proposed to exist; this metastable form readily transits to ATG14- or UVRAG-containing complexes with BECN1:UVRAG being more stable than BECN1:ATG14. Component of the PI3K (PI3KC3/PI3K-III/class III phosphatidylinositol 3-kinase) complex the core of which is composed of the catalytic subunit PIK3C3, the regulatory subunit PIK3R4 and BECN1 associating with additional regulatory/auxiliary subunits to form alternative complex forms. Alternative complex forms containing a fourth regulatory subunit in a mutually exclusive manner are PI3K complex I (PI3KC3-C1) containing ATG14, and PI3K complex II (PI3KC3-C2) containing UVRAG. PI3KC3-C1 displays a V-shaped architecture with PIK3R4 serving as a bridge between PIK3C3 and the ATG14:BECN1 subcomplex. Both, PI3KC3-C1 and PI3KC3-C2, can associate with further regulatory subunits, such as RUBCN, SH3GLB1/Bif-1 and AMBRA1. PI3KC3-C1 probably associates with PIK3CB. Forms a complex with PPP2CA and AMBRA1; AMBRA1 and BECN1 components of the complex regulate MYC stability via different pathways. Component of the complex, at least composed of LRPPRC, BECN1 and BCL2; the interactions prevent BECN1 from forming an autophagy-inducing complex with PIK3C3. Interacts with AMBRA1, GOPC, GRID2. Interacts with BCL2 and BCL2L1 isoform Bcl-X(L); the interaction inhibits BECN1 function in promoting autophagy by interfering with the formation of the PI3K complex. Interacts with cytosolic HMGB1; inhibits the interaction of BECN1 and BCL2 leading to promotion of autophagy. Interacts with USP10, USP13, VMP1, DAPK1, RAB39A. Interacts with the poly-Gln domain of ATXN3; the interaction causes deubiquitination at Lys-402 and stabilizes BECN1. Interacts with SLAMF1. Interacts with TRIM5; the interaction causes activation of BECN1 by causing its dissociation from its inhibitors BCL2 and TAB2. Interacts with active ULK1 (phosphorylated on 'Ser-317') and MEFV simultaneously. Interacts with WDR81 and WDR91; negatively regulates the PI3 kinase/PI3K activity associated with endosomal membranes. Interacts with LAPTM4B; competes with EGFR for LAPTM4B binding; regulates EGFR activity. Interacts with TRIM50. Interacts with TRIM16. Interacts with ATG14; this interaction is increased in the absence of TMEM39A. Interacts with WASHC1; preventing interaction with AMBRA1 and the DCX(AMBRA1) complex and subsequent ubiquitination. Interacts with TRIM17. Interacts with BCL2L10/BCL-B (via BH1 domain). Interacts with SH3BGRL. Interacts with IRGM; enhancing BECN1-interacting partners and influencing the composition of the BECN1 complex. Interacts with ARMC3. Interacts with LRPPRC. In terms of processing, phosphorylation at Thr-119 by DAPK1 reduces its interaction with BCL2 and BCL2L1 and promotes induction of autophagy. In response to autophagic stimuli, phosphorylated at serine residues by AMPK in an ATG14-dependent manner, and this phosphorylation is critical for maximally efficient autophagy. Post-translationally, polyubiquitinated by NEDD4, both with 'Lys-11'- and 'Lys-63'-linkages. 'Lys-11'-linked polyubiquitination leads to degradation and is enhanced when the stabilizing interaction partner VPS34 is depleted. Deubiquitinated by USP10 and USP13, leading to stabilize the PIK3C3/VPS34-containing complexes. Polyubiquitinated at Lys-402 with 'Lys-48'-linkages. 'Lys-48'-linked polyubiquitination of Lys-402 leads to degradation. Deubiquitinated by ATXN3, leading to stabilization. Ubiquitinated at Lys-437 via 'Lys-63'-linkage by the DCX(AMBRA1) complex, thereby increasing the association between BECN1 and PIK3C3 to promote PIK3C3 activity. 'Lys-48'-linked ubiquitination by RNF216 leads to proteasomal degradation and autophagy inhibition. Proteolytically processed by caspases including CASP8 and CASP3; the C-terminal fragments lack autophagy-inducing capacity and are proposed to induce apoptosis. Thus the cleavage is proposed to be an determinant to switch from autophagy to apoptosis pathways affecting cellular homeostasis including viral infections and survival of tumor cells.

The protein resides in the cytoplasm. Its subcellular location is the golgi apparatus. The protein localises to the trans-Golgi network membrane. It localises to the endosome membrane. It is found in the endoplasmic reticulum membrane. The protein resides in the mitochondrion membrane. Its subcellular location is the cytoplasmic vesicle. The protein localises to the autophagosome. It localises to the mitochondrion. It is found in the nucleus. In terms of biological role, plays a central role in autophagy. Acts as a core subunit of the PI3K complex that mediates formation of phosphatidylinositol 3-phosphate; different complex forms are believed to play a role in multiple membrane trafficking pathways: PI3KC3-C1 is involved in initiation of autophagosomes and PI3KC3-C2 in maturation of autophagosomes and endocytosis. Involved in regulation of degradative endocytic trafficking and required for the abscission step in cytokinesis, probably in the context of PI3KC3-C2. Essential for the formation of PI3KC3-C2 but not PI3KC3-C1 PI3K complex forms. Involved in endocytosis. May play a role in antiviral host defense. Functionally, beclin-1-C 35 kDa localized to mitochondria can promote apoptosis; it induces the mitochondrial translocation of BAX and the release of proapoptotic factors. The chain is Beclin-1 (BECN1) from Pongo abelii (Sumatran orangutan).